We begin with the raw amino-acid sequence, 1225 residues long: DNA-directed RNA polymerase subunit beta' (1225 aa).

4 residues coordinate Zn(2+): Cys60, Cys62, Cys75, and Cys78. Mg(2+) is bound by residues Asp450, Asp452, and Asp454. The Zn(2+) site is built by Cys818, Cys892, Cys899, and Cys902.

Belongs to the RNA polymerase beta' chain family. The RNAP catalytic core consists of 2 alpha, 1 beta, 1 beta' and 1 omega subunit. When a sigma factor is associated with the core the holoenzyme is formed, which can initiate transcription. Mg(2+) serves as cofactor. It depends on Zn(2+) as a cofactor.

It catalyses the reaction RNA(n) + a ribonucleoside 5'-triphosphate = RNA(n+1) + diphosphate. Its function is as follows. DNA-dependent RNA polymerase catalyzes the transcription of DNA into RNA using the four ribonucleoside triphosphates as substrates. The sequence is that of DNA-directed RNA polymerase subunit beta' from Streptococcus pneumoniae (strain ATCC 700669 / Spain 23F-1).